A 116-amino-acid chain; its full sequence is Selenoprotein H (116 aa).

At lysine 20 the chain carries N6-acetyllysine. A cross-link (cysteinyl-selenocysteine (Cys-Sec); redox-active) is located at residues 35-38 (CTSU). A non-standard amino acid (selenocysteine) is located at residue selenocysteine 38.

This sequence belongs to the SelWTH family.

May be involved in a redox-related process. This chain is Selenoprotein H, found in Mus musculus (Mouse).